The primary structure comprises 395 residues: uncharacterized protein (395 aa).

This is an uncharacterized protein from Escherichia coli (strain K12).